A 391-amino-acid polypeptide reads, in one-letter code: 3-ketoacyl-CoA thiolase (391 aa).

The active-site Acyl-thioester intermediate is the Cys95. Catalysis depends on proton acceptor residues His347 and Cys377.

This sequence belongs to the thiolase-like superfamily. Thiolase family. In terms of assembly, heterotetramer of two alpha chains (FadB) and two beta chains (FadA).

It is found in the cytoplasm. It carries out the reaction an acyl-CoA + acetyl-CoA = a 3-oxoacyl-CoA + CoA. The protein operates within lipid metabolism; fatty acid beta-oxidation. In terms of biological role, catalyzes the final step of fatty acid oxidation in which acetyl-CoA is released and the CoA ester of a fatty acid two carbons shorter is formed. In Vibrio parahaemolyticus serotype O3:K6 (strain RIMD 2210633), this protein is 3-ketoacyl-CoA thiolase.